The primary structure comprises 274 residues: Octanoyltransferase LipM (274 aa).

Residues 31-245 (GEVPPTLRLY…GFAEALGARL (215 aa)) enclose the BPL/LPL catalytic domain. The active-site Acyl-thioester intermediate is C147.

The protein belongs to the octanoyltransferase LipM family. Monomer.

It carries out the reaction octanoyl-[ACP] + L-lysyl-[protein] = N(6)-octanoyl-L-lysyl-[protein] + holo-[ACP] + H(+). It functions in the pathway protein modification; protein lipoylation via endogenous pathway; protein N(6)-(lipoyl)lysine from octanoyl-[acyl-carrier-protein]. Catalyzes the transfer of endogenously produced octanoic acid from octanoyl-acyl-carrier-protein onto the lipoyl domain of GcvH, an intermediate carrier during protein lipoylation. In Kyrpidia tusciae (strain DSM 2912 / NBRC 15312 / T2) (Bacillus tusciae), this protein is Octanoyltransferase LipM.